Here is a 289-residue protein sequence, read N- to C-terminus: 33 kDa chaperonin (289 aa).

Cystine bridges form between Cys-229–Cys-231 and Cys-262–Cys-265.

It belongs to the HSP33 family. Post-translationally, under oxidizing conditions two disulfide bonds are formed involving the reactive cysteines. Under reducing conditions zinc is bound to the reactive cysteines and the protein is inactive.

It localises to the cytoplasm. In terms of biological role, redox regulated molecular chaperone. Protects both thermally unfolding and oxidatively damaged proteins from irreversible aggregation. Plays an important role in the bacterial defense system toward oxidative stress. The protein is 33 kDa chaperonin of Pectobacterium carotovorum subsp. carotovorum (strain PC1).